The sequence spans 1010 residues: Polyhomeotic-like protein 1 (1010 aa).

Low complexity predominate over residues 1–22 (METESEQNSSSTNGSSSSGASS). Disordered stretches follow at residues 1–25 (METESEQNSSSTNGSSSSGASSRPQ), 212–243 (NQQASAQGPQMPGSTQKAIPPGASPVSGLSQT), 259–312 (GQSL…TGVV), 444–506 (QQQG…SKPP), 565–588 (GAVQPGQAHLASSPPSSQAAPGAL), and 646–678 (KRKAESEEERDDLSALASVLPTKASPAAESPKV). Positions 212–228 (NQQASAQGPQMPGSTQK) are enriched in polar residues. Residues 279 to 292 (MGPGGGGQAPGGLG) are compositionally biased toward gly residues. The segment covering 453-463 (PQPPQVPPTQQ) has biased composition (pro residues). Over residues 464–480 (VPPSQSQQQAQTLVVQP) the composition is skewed to low complexity. The span at 488-500 (TLPPEPTSKPPIP) shows a compositional bias: pro residues. A compositionally biased stretch (low complexity) spans 575–587 (ASSPPSSQAAPGA). Residue S651 is modified to Phosphoserine. K769 participates in a covalent cross-link: Glycyl lysine isopeptide (Lys-Gly) (interchain with G-Cter in SUMO2). A disordered region spans residues 772 to 794 (QAGLPTGLNESQPSGPLGGDSPS). The FCS-type zinc-finger motif lies at 797–831 (LEKKANLLKCEYCGKYAPAEQFRGSKRFCSMTCAK). The Zn(2+) site is built by C806, C809, C825, and C829. Positions 854 to 928 (ASYARVRRRG…LGNTITTPST (75 aa)) are disordered. The residue at position 904 (S904) is a Phosphoserine. T928 bears the Phosphothreonine mark. The SAM domain occupies 946–1010 (WSVEEVYEFI…CAKINVLKET (65 aa)).

As to quaternary structure, homodimer. Component of a PRC1-like complex. Interacts with the SAM domain of SCMH1 via its SAM domain in vitro. Interacts with RNF2 and CBX7. Interacts with PHC2. Interacts with BMI1. Highly expressed in testis with lower levels in most other tissues. Expressed in embryonic stem cells.

The protein resides in the nucleus. Its function is as follows. Component of a Polycomb group (PcG) multiprotein PRC1-like complex, a complex class required to maintain the transcriptionally repressive state of many genes, including Hox genes, throughout development. PcG PRC1 complex acts via chromatin remodeling and modification of histones; it mediates monoubiquitination of histone H2A 'Lys-119', rendering chromatin heritably changed in its expressibility. Required for proper control of cellular levels of GMNN expression. The chain is Polyhomeotic-like protein 1 from Mus musculus (Mouse).